The following is a 77-amino-acid chain: Large ribosomal subunit protein uL29 (77 aa).

It belongs to the universal ribosomal protein uL29 family.

The chain is Large ribosomal subunit protein uL29 from Mycolicibacterium smegmatis (strain ATCC 700084 / mc(2)155) (Mycobacterium smegmatis).